We begin with the raw amino-acid sequence, 579 residues long: Insulin-like growth factor 2 mRNA-binding protein 3 (579 aa).

RRM domains are found at residues Asn2–Pro75 and Arg81–Asp156. Residues Ala160 to Lys192 are disordered. The segment covering Arg177–Ser187 has biased composition (low complexity). Ser184 is subject to Phosphoserine. 3 consecutive KH domains span residues Asp195–Ile260, Glu276–Ile343, and Thr405–Ile470. Glycyl lysine isopeptide (Lys-Gly) (interchain with G-Cter in SUMO2) cross-links involve residues Lys450 and Lys475. The region spanning Lys487–Ile553 is the KH 4 domain. Thr528 carries the phosphothreonine modification.

Belongs to the RRM IMP/VICKZ family. As to quaternary structure, can form homooligomers and heterooligomers with IGF2BP1 and IGF2BP3 in an RNA-dependent manner. Interacts with IGF2BP1. Interacts with ELAVL1, DHX9, HNRNPU, MATR3 and PABPC1. Expressed in fetal liver, fetal lung, fetal kidney, fetal thymus, fetal placenta, fetal follicles of ovary and gonocytes of testis, growing oocytes, spermatogonia and semen (at protein level). Expressed in cervix adenocarcinoma, in testicular, pancreatic and renal-cell carcinomas (at protein level). Expressed ubiquitously during fetal development at 8 and 14 weeks of gestation. Expressed in ovary, testis, brain, placenta, pancreatic cancer tissues and pancreatic cancer cell lines.

Its subcellular location is the nucleus. The protein localises to the cytoplasm. The protein resides in the P-body. It is found in the stress granule. Functionally, RNA-binding factor that may recruit target transcripts to cytoplasmic protein-RNA complexes (mRNPs). This transcript 'caging' into mRNPs allows mRNA transport and transient storage. It also modulates the rate and location at which target transcripts encounter the translational apparatus and shields them from endonuclease attacks or microRNA-mediated degradation. Preferentially binds to N6-methyladenosine (m6A)-containing mRNAs and increases their stability. Binds to the 3'-UTR of CD44 mRNA and stabilizes it, hence promotes cell adhesion and invadopodia formation in cancer cells. Binds to beta-actin/ACTB and MYC transcripts. Increases MYC mRNA stability by binding to the coding region instability determinant (CRD) and binding is enhanced by m6A-modification of the CRD. Binds to the 5'-UTR of the insulin-like growth factor 2 (IGF2) mRNAs. The chain is Insulin-like growth factor 2 mRNA-binding protein 3 (IGF2BP3) from Homo sapiens (Human).